A 600-amino-acid chain; its full sequence is Estrogen receptor (600 aa).

The modulating (transactivation AF-1); mediates interaction with MACROD1 stretch occupies residues 1–189 (MTMTLHTKAS…IMESAKETRY (189 aa)). O-linked (GlcNAc) serine glycosylation is present at S10. Residues 35–47 (MERALGEVYVDNS) are required for interaction with NCOA1. The interval 35-179 (MERALGEVYV…LSSSSEKGNM (145 aa)) is interaction with DDX5; self-association. A phosphoserine; by CDK2 mark is found at S109 and S111. S123 carries the post-translational modification Phosphoserine. The disordered stretch occupies residues 148 to 177 (DTGPPAFYRSNSDNRRQNGRERLSSSSEKG). Basic and acidic residues predominate over residues 159 to 170 (SDNRRQNGRERL). S172 is subject to Phosphoserine; by CK2. 2 consecutive NR C4-type zinc fingers follow at residues 190-210 (CAVCNDYASGYHYGVWSCEGC) and 226-250 (CPATNQCTIDKNRRKSCQACRLRKC). The nuclear receptor DNA-binding region spans 190-255 (CAVCNDYASG…RLRKCYEVGM (66 aa)). Residues 190 to 315 (CAVCNDYASG…TKKNSPALSL (126 aa)) are mediates interaction with DNTTIP2. The segment at 256–315 (MKGGIRKDRRGGRMLKHKRQRDDLEGRNEMGTSGDMRAANLWPSPLVIKHTKKNSPALSL) is hinge. An Asymmetric dimethylarginine; by PRMT1 modification is found at R265. The tract at residues 267-600 (GRMLKHKRQR…PEAEGFPNTI (334 aa)) is interaction with AKAP13. The segment at 269-600 (MLKHKRQRDD…PEAEGFPNTI (332 aa)) is self-association. One can recognise an NR LBD domain in the interval 316-552 (TADQMVSALL…DLLLEMLDAH (237 aa)). The tract at residues 316-600 (TADQMVSALL…PEAEGFPNTI (285 aa)) is transactivation AF-2. Residues E358 and R399 each coordinate 17beta-estradiol. C452 carries S-palmitoyl cysteine lipidation. H529 contacts 17beta-estradiol. At Y542 the chain carries Phosphotyrosine; by Tyr-kinases. The segment at 558–581 (ASRMGVPPEEPSQSQLTTTSSTSA) is disordered. Positions 569–581 (SQSQLTTTSSTSA) are enriched in low complexity. O-linked (GlcNAc) threonine glycosylation occurs at T576.

It belongs to the nuclear hormone receptor family. NR3 subfamily. Interacts with BCAS3. Binds DNA as a homodimer. Can form a heterodimer with ESR2. Interacts with coactivator NCOA5. Interacts with PELP1, the interaction is enhanced by 17-beta-estradiol; the interaction increases ESR1 transcriptional activity. Interacts with NCOA7; the interaction is ligand-inducible. Interacts with AKAP13, CUEDC2, HEXIM1, KDM5A, MAP1S, SMARD1, and UBE1C. Interacts with MUC1; the interaction is stimulated by 7 beta-estradiol (E2) and enhances ESR1-mediated transcription. Interacts with DNTTIP2, and UIMC1. Interacts with KMT2D/MLL2. Interacts with ATAD2; the interaction is enhanced by estradiol. Interacts with KIF18A and LDB1. Interacts with RLIM (via its C-terminus). Interacts with MACROD1. Interacts with SH2D4A and PLCG. Interacts with SH2D4A; the interaction blocks binding to PLCG and inhibits estrogen-induced cell proliferation. Interacts with DYNLL1. Interacts with CCDC62; the interaction requires estradiol and appears to enhance the transcription of target genes. Interacts with NR2C1; the interaction prevents homodimerization of ESR1 and suppresses its transcriptional activity and cell growth. Interacts with DNAAF4. Interacts with PRMT2. Interacts with RBFOX2. Interacts with EP300; the interaction is estrogen-dependent and enhanced by CITED1. Interacts with CITED1; the interaction is estrogen-dependent. Interacts with FAM120B, FOXL2, PHB2 and SLC30A9. Interacts with coactivators NCOA3 and NCOA6. Interacts with STK3/MST2 only in the presence of SAV1 and vice-versa. Binds to CSNK1D. Interacts with NCOA2; NCOA2 can interact with ESR1 AF-1 and AF-2 domains simultaneously and mediate their transcriptional synergy. Interacts with DDX5. Interacts with NCOA1; the interaction seems to require a self-association of N-terminal and C-terminal regions. Interacts with ZNF366, DDX17, NFKB1, RELA, SP1 and SP3. Interacts with NRIP1. Interacts with GPER1; the interaction occurs in an estrogen-dependent manner. Interacts with TRIP4 (ufmylated); estrogen dependent. Interacts with LMTK3; the interaction phosphorylates ESR1 (in vitro) and protects it against proteasomal degradation. Interacts with CCAR2 (via N-terminus) in a ligand-independent manner. Interacts with ZFHX3. Interacts with SFR1 in a ligand-dependent and -independent manner. Interacts with DCAF13, LATS1 and DCAF1; regulates ESR1 ubiquitination and ubiquitin-mediated proteasomal degradation. Interacts (via DNA-binding domain) with POU4F2 (C-terminus); this interaction increases the estrogen receptor ESR1 transcriptional activity in a DNA- and ligand 17-beta-estradiol-independent manner. Interacts with ESRRB isoform 1. Interacts with UBE3A and WBP2. Interacts with GTF2B. Interacts with RBM39. In the absence of hormonal ligand, interacts with TACC1. Interacts with PI3KR1 or PI3KR2 and PTK2/FAK1. Interacts with SRC. Interacts with BAG1; the interaction is promoted in the absence of estradiol (17-beta-estradiol/E2). Interacts with and ubiquitinated by STUB1; the interaction is promoted in the absence of estradiol (17-beta-estradiol/E2). Interacts with NEDD8. In terms of processing, phosphorylated by cyclin A/CDK2 and CK1. Phosphorylation probably enhances transcriptional activity. Dephosphorylation at Ser-123 by PPP5C inhibits its transactivation activity. Phosphorylated by LMTK3 (in vitro). Ubiquitinated; regulated by LATS1 via DCAF1 it leads to ESR1 proteasomal degradation. Deubiquitinated by OTUB1. Ubiquitinated by STUB1/CHIP; in the CA1 hippocampal region following loss of endogenous circulating estradiol (17-beta-estradiol/E2). Ubiquitinated by UBR5, leading to its degradation: UBR5 specifically recognizes and binds ligand-bound ESR1 when it is not associated with coactivators (NCOAs). In presence of NCOAs, the UBR5-degron is not accessible, preventing its ubiquitination and degradation. Post-translationally, palmitoylated at Cys-452 by ZDHHC7 and ZDHHC21. This modification is required for plasma membrane targeting and for rapid intracellular signaling via ERK and AKT kinases and cAMP generation, but not for signaling mediated by the nuclear hormone receptor. In terms of processing, dimethylated by PRMT1 at Arg-265. The methylation may favor cytoplasmic localization. Demethylated by JMJD6 at Arg-265. As to expression, expressed in the CA1 region of the hippocampus, expression decreases with age (at protein level). Expressed in the uterus (at protein level).

It is found in the nucleus. The protein resides in the cytoplasm. Its subcellular location is the golgi apparatus. It localises to the cell membrane. Nuclear hormone receptor. The steroid hormones and their receptors are involved in the regulation of eukaryotic gene expression and affect cellular proliferation and differentiation in target tissues. Ligand-dependent nuclear transactivation involves either direct homodimer binding to a palindromic estrogen response element (ERE) sequence or association with other DNA-binding transcription factors, such as AP-1/c-Jun, c-Fos, ATF-2, Sp1 and Sp3, to mediate ERE-independent signaling. Ligand binding induces a conformational change allowing subsequent or combinatorial association with multiprotein coactivator complexes through LXXLL motifs of their respective components. Mutual transrepression occurs between the estrogen receptor (ER) and NF-kappa-B in a cell-type specific manner. Decreases NF-kappa-B DNA-binding activity and inhibits NF-kappa-B-mediated transcription from the IL6 promoter and displace RELA/p65 and associated coregulators from the promoter. Recruited to the NF-kappa-B response element of the CCL2 and IL8 promoters and can displace CREBBP. Present with NF-kappa-B components RELA/p65 and NFKB1/p50 on ERE sequences. Can also act synergistically with NF-kappa-B to activate transcription involving respective recruitment adjacent response elements; the function involves CREBBP. Can activate the transcriptional activity of TFF1. Also mediates membrane-initiated estrogen signaling involving various kinase cascades. Essential for MTA1-mediated transcriptional regulation of BRCA1 and BCAS3. Maintains neuronal survival in response to ischemic reperfusion injury when in the presence of circulating estradiol (17-beta-estradiol/E2). This is Estrogen receptor (Esr1) from Rattus norvegicus (Rat).